The chain runs to 233 residues: ATP synthase subunit a (233 aa).

The next 7 membrane-spanning stretches (helical) occupy residues F29–V49, L60–G80, V89–F109, N115–I135, I143–I163, F185–L205, and F206–K226.

The protein belongs to the ATPase A chain family. In terms of assembly, F-type ATPases have 2 components, CF(1) - the catalytic core - and CF(0) - the membrane proton channel. CF(1) has five subunits: alpha(3), beta(3), gamma(1), delta(1), epsilon(1). CF(0) has three main subunits: a(1), b(2) and c(9-12). The alpha and beta chains form an alternating ring which encloses part of the gamma chain. CF(1) is attached to CF(0) by a central stalk formed by the gamma and epsilon chains, while a peripheral stalk is formed by the delta and b chains.

Its subcellular location is the cell inner membrane. Key component of the proton channel; it plays a direct role in the translocation of protons across the membrane. The chain is ATP synthase subunit a from Oleidesulfovibrio alaskensis (strain ATCC BAA-1058 / DSM 17464 / G20) (Desulfovibrio alaskensis).